Here is a 653-residue protein sequence, read N- to C-terminus: Sulfate transporter 1.2 (653 aa).

The segment at 1–30 is disordered; that stretch reads MSSRAHPVDGSPATDGGHVPMKPSPTRHKV. Residues 1 to 91 lie on the Cytoplasmic side of the membrane; the sequence is MSSRAHPVDG…GRNYTFKKFR (91 aa). A helical membrane pass occupies residues 92–112; that stretch reads GDLISGLTIASLCIPQDIGYA. Topologically, residues 113–116 are extracellular; that stretch reads KLAN. A helical transmembrane segment spans residues 117–137; it reads LDPKYGLYSSFVPPLVYACMG. Topologically, residues 138–141 are cytoplasmic; it reads SSRD. The chain crosses the membrane as a helical span at residues 142–162; it reads IAIGPVAVVSLLLGTLLRAEI. The Extracellular segment spans residues 163–173; sequence DPNTSPDEYLR. Helical transmembrane passes span 174–194 and 195–215; these read LAFT…FFRL and GFLI…GAAI. Residues 216–253 are Extracellular-facing; it reads TIALQQLKGFLGIKKFTKKTDIISVLESVFKAAHHGWN. A helical membrane pass occupies residues 254 to 274; it reads WQTILIGASFLTFLLTSKIIG. Residues 275–280 lie on the Cytoplasmic side of the membrane; the sequence is KKSKKL. The chain crosses the membrane as a helical span at residues 281–301; the sequence is FWVPAIAPLISVIVSTFFVYI. Residues 302 to 339 are Extracellular-facing; that stretch reads TRADKQGVQIVKHLDQGINPSSFHLIYFTGDNLAKGIR. A helical transmembrane segment spans residues 340 to 360; that stretch reads IGVVAGMVALTEAVAIGRTFA. Over 361–372 the chain is Cytoplasmic; the sequence is AMKDYQIDGNKE. The helical transmembrane segment at 373 to 393 threads the bilayer; it reads MVALGMMNVVGSMSSCYVATG. Residues 394 to 409 lie on the Extracellular side of the membrane; sequence SFSRSAVNFMAGCQTA. The helical transmembrane segment at 410 to 430 threads the bilayer; it reads VSNIIMSIVVLLTLLFLTPLF. The Cytoplasmic portion of the chain corresponds to 431–438; it reads KYTPNAIL. A helical transmembrane segment spans residues 439–459; it reads AAIIINAVIPLIDIQAAILIF. Residues 460–466 are Extracellular-facing; that stretch reads KVDKLDF. Residues 467–487 form a helical membrane-spanning segment; it reads IACIGAFFGVIFVSVEIGLLI. Over 488-653 the chain is Cytoplasmic; that stretch reads AVSISFAKIL…ACCPKLSNEV (166 aa). Residues 522 to 645 enclose the STAS domain; sequence QYPEATMVPG…LTVADAVEAC (124 aa).

Belongs to the SLC26A/SulP transporter (TC 2.A.53.1) family. Homodimer. Interacts with OASA1 through its STAS domain. Expressed in lateral root cap, root hairs, epidermal and cortical cells of roots.

It is found in the cell membrane. With respect to regulation, interaction with OASA1 negatively impacts the transporter activity. High-affinity H(+)/sulfate cotransporter that mediates the uptake of the environmental sulfate by plant roots. Plays a central role in the regulation of sulfate assimilation. Unable to transport molybdate. This Arabidopsis thaliana (Mouse-ear cress) protein is Sulfate transporter 1.2 (SULTR1;2).